Here is a 622-residue protein sequence, read N- to C-terminus: Dopamine beta-hydroxylase (622 aa).

Residues 1–20 (MQAHLSHQPCWSSLPSPSVR) lie on the Cytoplasmic side of the membrane. The helical; Signal-anchor for type II membrane protein transmembrane segment at 21–41 (EAASMYGTAVAIFLVILVAAL) threads the bilayer. Topologically, residues 42–621 (RGSEPPESPF…TVPITTEADA (580 aa)) are intragranular. Residues 61-177 (GILELSWNVS…DTVHLVYGIL (117 aa)) form the DOMON domain. Asparagine 68 and asparagine 188 each carry an N-linked (GlcNAc...) asparagine glycan. Cystine bridges form between cysteine 158–cysteine 600, cysteine 236–cysteine 287, cysteine 273–cysteine 299, cysteine 394–cysteine 507, cysteine 398–cysteine 569, and cysteine 470–cysteine 492. The active site involves tyrosine 234. The Cu(2+) site is built by histidine 266 and histidine 267. A Cu(2+)-binding site is contributed by histidine 337. Position 350 is a phosphoserine; by CaMK (serine 350). Residue histidine 416 is part of the active site. Residues histidine 416 and histidine 418 each coordinate Cu(2+). An N-linked (GlcNAc...) asparagine glycan is attached at asparagine 476. Methionine 491 contacts Cu(2+). Asparagine 570 carries N-linked (GlcNAc...) asparagine glycosylation. The segment at 594 to 622 (EEPTPRCPIRQTQSPANPTVPITTEADAE) is disordered. The segment covering 603 to 615 (RQTQSPANPTVPI) has biased composition (polar residues).

The protein belongs to the copper type II ascorbate-dependent monooxygenase family. In terms of assembly, homotetramer; composed of two disulfide-linked dimers. The cofactor is Cu(2+). Proteolytic cleavage after the membrane-anchor leads to the release of the soluble form. In terms of processing, N-glycosylated. Detected in adrenal gland secretory granules (at protein level). Detected in adrenal gland.

It localises to the cytoplasmic vesicle. The protein localises to the secretory vesicle lumen. It is found in the secretory vesicle. Its subcellular location is the chromaffin granule lumen. The protein resides in the secretory vesicle membrane. It localises to the chromaffin granule membrane. The catalysed reaction is dopamine + 2 L-ascorbate + O2 = (R)-noradrenaline + 2 monodehydro-L-ascorbate radical + H2O. It participates in catecholamine biosynthesis; (R)-noradrenaline biosynthesis; (R)-noradrenaline from dopamine: step 1/1. In terms of biological role, catalyzes the hydroxylation of dopamine to noradrenaline (also known as norepinephrine), and is thus vital for regulation of these neurotransmitters. This is Dopamine beta-hydroxylase (Dbh) from Mus musculus (Mouse).